The sequence spans 334 residues: Anthranilate phosphoribosyltransferase (334 aa).

5-phospho-alpha-D-ribose 1-diphosphate contacts are provided by residues G81, G84–D85, T89, N91–T94, K109–S117, and A121. G81 serves as a coordination point for anthranilate. Position 93 (S93) interacts with Mg(2+). R167 contributes to the anthranilate binding site. Residues D225 and E226 each contribute to the Mg(2+) site.

It belongs to the anthranilate phosphoribosyltransferase family. In terms of assembly, homodimer. Mg(2+) serves as cofactor.

It catalyses the reaction N-(5-phospho-beta-D-ribosyl)anthranilate + diphosphate = 5-phospho-alpha-D-ribose 1-diphosphate + anthranilate. Its pathway is amino-acid biosynthesis; L-tryptophan biosynthesis; L-tryptophan from chorismate: step 2/5. Catalyzes the transfer of the phosphoribosyl group of 5-phosphorylribose-1-pyrophosphate (PRPP) to anthranilate to yield N-(5'-phosphoribosyl)-anthranilate (PRA). This is Anthranilate phosphoribosyltransferase from Actinobacillus pleuropneumoniae serotype 7 (strain AP76).